A 250-amino-acid chain; its full sequence is Triosephosphate isomerase (250 aa).

9-11 (NWK) contacts substrate. The active-site Electrophile is H95. Residue E167 is the Proton acceptor of the active site. Residues G173, S213, and 234–235 (GG) contribute to the substrate site.

This sequence belongs to the triosephosphate isomerase family. In terms of assembly, homodimer.

It localises to the cytoplasm. It carries out the reaction D-glyceraldehyde 3-phosphate = dihydroxyacetone phosphate. It functions in the pathway carbohydrate biosynthesis; gluconeogenesis. It participates in carbohydrate degradation; glycolysis; D-glyceraldehyde 3-phosphate from glycerone phosphate: step 1/1. In terms of biological role, involved in the gluconeogenesis. Catalyzes stereospecifically the conversion of dihydroxyacetone phosphate (DHAP) to D-glyceraldehyde-3-phosphate (G3P). In Exiguobacterium sibiricum (strain DSM 17290 / CCUG 55495 / CIP 109462 / JCM 13490 / 255-15), this protein is Triosephosphate isomerase.